Reading from the N-terminus, the 136-residue chain is Cyclase aurE (136 aa).

It belongs to the aurE cyclase family.

It functions in the pathway polyketide biosynthesis. In terms of biological role, cyclase; part of the gene cluster that mediates the biosynthesis of aurovertins, fungal polyketides that exhibit potent inhibition of adenosine triphosphate synthase. Tha biosynthesis starts with the HR-PKS aurA that selects propionate as the starter unit; synthesizes a hexa-ene chain through the repeated functions of the KR and DH domains in the first six iterations; selectively introduces three alpha-methyl substitutions at C4, C6, and C16 using the S-adensylmethionine-dependent cMET; and shuts off KR and DH in the last three iterations to afford a 1,3,5-triketo portion that can undergo intramolecular cyclization to yield the alpha-pyrone intermediate. AurE may act as a cyclase and enhances the rate of pyrone formation and product release of aurA. The methyltransferase aurB then methylates the C17 hydroxyl group. C17 methylation is required to initiate epoxidation by the downstream monooxygenase aurC. The monooxygenase aurC and the epoxide hydrolase aurD can iteratively transform the terminal triene portion of the methylated precursor into the dioxabicyclo[3.2.1]octane scaffold of aurovertin E. Epoxidation modifications of the precursor occur in two separate steps; bis-epoxidation of the two terminal olefins takes place first, followed by another epoxidation that occurs at C7-C8 after tetrahydrofuran formation. The O-acyltransferase aurG converts aurovertin E to aurovertin A. The chain is Cyclase aurE from Calcarisporium arbuscula (Dendryphion arbuscula).